Here is a 994-residue protein sequence, read N- to C-terminus: Receptor-like protein 6 (994 aa).

A signal peptide spans 1–25 (MTGLYSSMSFFLRTIVLLFSTSSFC). Residues 26–946 (NTFASLTQDS…SSSSSSEEDE (921 aa)) lie on the Extracellular side of the membrane. 3 N-linked (GlcNAc...) asparagine glycosylation sites follow: asparagine 116, asparagine 134, and asparagine 154. LRR repeat units lie at residues 122–146 (LQHL…EFSK), 148–171 (MRLE…LLQL), 174–199 (LVSL…LFLH), 205–228 (FMNL…EFSY), 230–253 (WSLR…VLLI), 254–278 (PNLE…LRNN), 280–301 (LLKL…ISNL), 302–325 (KHLT…LRSL), 326–349 (SHLS…VSNL), 350–373 (KQLT…LLNL), 375–397 (QLRY…ISQL), 398–421 (SNLE…LFNI), 423–445 (SLTT…NISL), 446–471 (LHNL…VFLS), 477–497 (SLAL…SEFS), 498–520 (SHLE…IRNQ), 521–544 (RNLS…LWRL), 546–569 (ELST…ALSG), and 571–595 (KIVM…GIQY). Asparagine 277 and asparagine 287 each carry an N-linked (GlcNAc...) asparagine glycan. N-linked (GlcNAc...) asparagine glycosylation is found at asparagine 420, asparagine 435, and asparagine 442. A glycan (N-linked (GlcNAc...) asparagine) is linked at asparagine 489. Asparagine 522, asparagine 554, and asparagine 561 each carry an N-linked (GlcNAc...) asparagine glycan. One copy of the LRR 20; degenerate repeat lies at 597–613 (LGSYNNFTGYIPPSICG). A glycan (N-linked (GlcNAc...) asparagine) is linked at asparagine 602. LRR repeat units follow at residues 614 to 637 (LANP…CLEA), 639 to 663 (MSSL…FMNA), 665 to 687 (VLSS…LAGC), 689 to 710 (ALEI…WLNS), 711 to 737 (LPKL…VWFG), 739 to 762 (PLLR…YFMN), 803 to 827 (LTKY…VGIL), 828 to 851 (KELH…LANL), 852 to 875 (TNLE…LGTL), and 877 to 900 (SLEW…QFHR). Residue asparagine 649 is glycosylated (N-linked (GlcNAc...) asparagine). An N-linked (GlcNAc...) asparagine glycan is attached at asparagine 701. Asparagine 762 is a glycosylation site (N-linked (GlcNAc...) asparagine). N-linked (GlcNAc...) asparagine glycosylation is found at asparagine 834 and asparagine 850. 2 N-linked (GlcNAc...) asparagine glycosylation sites follow: asparagine 882 and asparagine 902. A helical transmembrane segment spans residues 947–967 (LISWIAACLGFAPGMVFGLTM). Topologically, residues 968–994 (GYIMTSHKHEWFMDTFGRRKGRSTRTR) are cytoplasmic.

It belongs to the RLP family.

It is found in the cell membrane. This chain is Receptor-like protein 6, found in Arabidopsis thaliana (Mouse-ear cress).